Consider the following 428-residue polypeptide: C4-dicarboxylate transport protein (428 aa).

Helical transmembrane passes span 8–28 (SLYFQVLTAIAIGILLGHFYP), 44–64 (LIKMIIAPVIFCTVVTGIAGM), 76–96 (VALLYFEVVSTIALIIGLIIV), 142–162 (IGAFASGNILQVLLFAVLFGF), 184–204 (VIFGIINMIMRLAPIGAFGAM), 222–242 (LIICFYITCILFVVVVLGSIA), 326–346 (IFHQITLLVVLLLSSKGAAGV), and 352–372 (IVLAATISAVGHLPIAGLALI).

This sequence belongs to the dicarboxylate/amino acid:cation symporter (DAACS) (TC 2.A.23) family.

It is found in the cell inner membrane. In terms of biological role, responsible for the transport of dicarboxylates such as succinate, fumarate, and malate from the periplasm across the membrane. This chain is C4-dicarboxylate transport protein, found in Enterobacter sp. (strain 638).